The following is a 341-amino-acid chain: Outer membrane protein U (341 aa).

A signal peptide spans 1 to 21 (MNKTLIALAVSAAAVATGAYA).

It belongs to the Gram-negative porin family. In terms of assembly, homotrimer.

It localises to the cell outer membrane. Its function is as follows. Forms pores that allow passive diffusion of small molecules across the outer membrane. The sequence is that of Outer membrane protein U (ompU) from Vibrio cholerae serotype O1 (strain ATCC 39315 / El Tor Inaba N16961).